The chain runs to 96 residues: Dynein light chain roadblock-type 2 (96 aa).

N-acetylalanine is present on A2.

This sequence belongs to the GAMAD family. As to quaternary structure, homodimer. The cytoplasmic dynein 1 complex consists of two catalytic heavy chains (HCs) and a number of non-catalytic subunits presented by intermediate chains (ICs), light intermediate chains (LICs) and light chains (LCs); the composition seems to vary in respect to the IC, LIC and LC composition. The heavy chain homodimer serves as a scaffold for the probable homodimeric assembly of the respective non-catalytic subunits. The ICs and LICs bind directly to the HC dimer and the LCs assemble on the IC dimer. Interacts with DYNC1I1 and DYNC1I2. Self-associates. Interacts with DYNLRB1.

The protein localises to the cytoplasm. It localises to the cytoskeleton. Its function is as follows. Acts as one of several non-catalytic accessory components of the cytoplasmic dynein 1 complex that are thought to be involved in linking dynein to cargos and to adapter proteins that regulate dynein function. Cytoplasmic dynein 1 acts as a motor for the intracellular retrograde motility of vesicles and organelles along microtubules. The polypeptide is Dynein light chain roadblock-type 2 (DYNLRB2) (Bos taurus (Bovine)).